An 879-amino-acid chain; its full sequence is Leucine--tRNA ligase (879 aa).

Positions 45-55 (PYPSGALHMGH) match the 'HIGH' region motif. Positions 637–641 (KMSKS) match the 'KMSKS' region motif. Position 640 (Lys640) interacts with ATP.

It belongs to the class-I aminoacyl-tRNA synthetase family.

Its subcellular location is the cytoplasm. The enzyme catalyses tRNA(Leu) + L-leucine + ATP = L-leucyl-tRNA(Leu) + AMP + diphosphate. The chain is Leucine--tRNA ligase from Xylella fastidiosa (strain M12).